The following is a 288-amino-acid chain: Ribosomal RNA small subunit methyltransferase I (288 aa).

Belongs to the methyltransferase superfamily. RsmI family.

The protein localises to the cytoplasm. It carries out the reaction cytidine(1402) in 16S rRNA + S-adenosyl-L-methionine = 2'-O-methylcytidine(1402) in 16S rRNA + S-adenosyl-L-homocysteine + H(+). Functionally, catalyzes the 2'-O-methylation of the ribose of cytidine 1402 (C1402) in 16S rRNA. This Vibrio cholerae serotype O1 (strain ATCC 39315 / El Tor Inaba N16961) protein is Ribosomal RNA small subunit methyltransferase I.